Reading from the N-terminus, the 205-residue chain is Holliday junction branch migration complex subunit RuvA (205 aa).

The tract at residues 1–64 is domain I; the sequence is MIGKLKGVID…EDQIKLFGFR (64 aa). The domain II stretch occupies residues 65–143; sequence TDHEREWFRL…SFANVDPTVV (79 aa). The segment at 144-154 is flexible linker; it reads HLAGDLDDQRA. Residues 154–205 form a domain III region; the sequence is APRPVRDAISALVNLGYGQPQATAAIAAASRGAGENAETAQLIRLGLKELSK.

The protein belongs to the RuvA family. In terms of assembly, homotetramer. Forms an RuvA(8)-RuvB(12)-Holliday junction (HJ) complex. HJ DNA is sandwiched between 2 RuvA tetramers; dsDNA enters through RuvA and exits via RuvB. An RuvB hexamer assembles on each DNA strand where it exits the tetramer. Each RuvB hexamer is contacted by two RuvA subunits (via domain III) on 2 adjacent RuvB subunits; this complex drives branch migration. In the full resolvosome a probable DNA-RuvA(4)-RuvB(12)-RuvC(2) complex forms which resolves the HJ.

Its subcellular location is the cytoplasm. In terms of biological role, the RuvA-RuvB-RuvC complex processes Holliday junction (HJ) DNA during genetic recombination and DNA repair, while the RuvA-RuvB complex plays an important role in the rescue of blocked DNA replication forks via replication fork reversal (RFR). RuvA specifically binds to HJ cruciform DNA, conferring on it an open structure. The RuvB hexamer acts as an ATP-dependent pump, pulling dsDNA into and through the RuvAB complex. HJ branch migration allows RuvC to scan DNA until it finds its consensus sequence, where it cleaves and resolves the cruciform DNA. The sequence is that of Holliday junction branch migration complex subunit RuvA from Nitrobacter winogradskyi (strain ATCC 25391 / DSM 10237 / CIP 104748 / NCIMB 11846 / Nb-255).